A 526-amino-acid polypeptide reads, in one-letter code: Peptide chain release factor 3 (526 aa).

The 269-residue stretch at D9 to L277 folds into the tr-type G domain. GTP contacts are provided by residues S18–T25, D86–H90, and N140–D143.

This sequence belongs to the TRAFAC class translation factor GTPase superfamily. Classic translation factor GTPase family. PrfC subfamily.

It is found in the cytoplasm. Functionally, increases the formation of ribosomal termination complexes and stimulates activities of RF-1 and RF-2. It binds guanine nucleotides and has strong preference for UGA stop codons. It may interact directly with the ribosome. The stimulation of RF-1 and RF-2 is significantly reduced by GTP and GDP, but not by GMP. This Colwellia psychrerythraea (strain 34H / ATCC BAA-681) (Vibrio psychroerythus) protein is Peptide chain release factor 3.